Here is a 126-residue protein sequence, read N- to C-terminus: MAFSGTWQVYAQENYEEFLKALALPEDLIKMARDIKPIVEIQQKGDDFVVTSKTPRQTVTNSFTLGKEADITTMDGKKLKCTVHLANGKLVTKSEKFSHEQEVKGNEMVETITFGGVTLIRRSKRV.

A2 carries the post-translational modification N-acetylalanine. 5 residues coordinate cholate: R56, Q57, K77, H99, and Q101.

It belongs to the calycin superfamily. Fatty-acid binding protein (FABP) family.

It localises to the cytoplasm. Binds free fatty acids and their coenzyme A derivatives, bilirubin, and some other small molecules in the cytoplasm. May be involved in intracellular lipid transport. Binds 2 molecules of cholate per subunit. The sequence is that of Fatty acid-binding protein, liver (FABP1) from Gallus gallus (Chicken).